Reading from the N-terminus, the 341-residue chain is Gibberellin 2-beta-dioxygenase 5 (341 aa).

One can recognise a Fe2OG dioxygenase domain in the interval 187–290 (REETCFLRLN…RFSMAFFLCP (104 aa)). 2-oxoglutarate is bound at residue Tyr-198. Fe cation is bound by residues His-213, Asp-215, and His-271. 2 residues coordinate 2-oxoglutarate: Arg-281 and Ser-283.

The protein belongs to the iron/ascorbate-dependent oxidoreductase family. GA2OX subfamily. It depends on L-ascorbate as a cofactor. Fe(2+) is required as a cofactor. Expressed in roots, leaves, culms, leaf sheaths and young panicles.

The protein localises to the cytoplasm. It is found in the nucleus. It catalyses the reaction gibberellin A1 + 2-oxoglutarate + O2 = gibberellin A8 + succinate + CO2. Its pathway is plant hormone biosynthesis; gibberellin biosynthesis. Catalyzes the 2-beta-hydroxylation of several biologically active gibberellins (GAs), leading to the homeostatic regulation of their endogenous level. Catabolism of GAs plays a central role in plant development. In vitro, converts GA12 and GA53 to the corresponding 2-beta-hydroxylated products GA110 and GA97, respectively. This Oryza sativa subsp. japonica (Rice) protein is Gibberellin 2-beta-dioxygenase 5.